The sequence spans 299 residues: N-acetylaspartate synthetase (299 aa).

The span at A44–G57 shows a compositional bias: pro residues. The interval A44–P70 is disordered. The span at P60–P70 shows a compositional bias: gly residues. The helical transmembrane segment at Y118–V138 threads the bilayer. One can recognise an N-acetyltransferase domain in the interval L143–A280.

The protein belongs to the NAT8 family. In terms of tissue distribution, expressed in brain, including in mesencephalic dopaminergic neurons of the substantia nigra and ventral tegmental area and oligodendrocytes. Expressed in cortical pyramidal neurons and granule cells of the hippocampus (at protein level).

It localises to the cytoplasm. It is found in the microsome membrane. The protein resides in the mitochondrion membrane. Its subcellular location is the endoplasmic reticulum membrane. It catalyses the reaction L-aspartate + acetyl-CoA = N-acetyl-L-aspartate + CoA + H(+). With respect to regulation, aminooxyacetic acid (AOAA) blocks its activity in both cytoplasm and mitochondria. Catalyzes the synthesis of N-acetylaspartate acid (NAA) from L-aspartate and acetyl-CoA. Promotes dopamine uptake by regulating TNF-alpha expression. Attenuates methamphetamine-induced inhibition of dopamine uptake. This chain is N-acetylaspartate synthetase (Nat8l), found in Rattus norvegicus (Rat).